We begin with the raw amino-acid sequence, 324 residues long: Phospho-N-acetylmuramoyl-pentapeptide-transferase (324 aa).

Transmembrane regions (helical) follow at residues 5 to 25 (VILFTIIMGFLISVLLSPIFI), 51 to 71 (TPTMGGIMIIFSITITTIVMI), 77 to 97 (ISPEMFLLLFVTLGYGLLGFL), 117 to 137 (LIGQIVIAVIFYAVFHYYQFA), 147 to 167 (VSFDLGWAYFILVVFMLVGGS), 176 to 196 (LDGLLSGTAAIAFGAFAILAW), 203 to 223 (VAIFSVAVAGAVLGFLVFNAH), 227 to 248 (VFMGDTGSLALGGAIVAIAILT), and 302 to 322 (VVVTFWTAGLLLAVLGIYIEV).

This sequence belongs to the glycosyltransferase 4 family. MraY subfamily. Requires Mg(2+) as cofactor.

Its subcellular location is the cell membrane. The catalysed reaction is UDP-N-acetyl-alpha-D-muramoyl-L-alanyl-gamma-D-glutamyl-meso-2,6-diaminopimeloyl-D-alanyl-D-alanine + di-trans,octa-cis-undecaprenyl phosphate = di-trans,octa-cis-undecaprenyl diphospho-N-acetyl-alpha-D-muramoyl-L-alanyl-D-glutamyl-meso-2,6-diaminopimeloyl-D-alanyl-D-alanine + UMP. It participates in cell wall biogenesis; peptidoglycan biosynthesis. Catalyzes the initial step of the lipid cycle reactions in the biosynthesis of the cell wall peptidoglycan: transfers peptidoglycan precursor phospho-MurNAc-pentapeptide from UDP-MurNAc-pentapeptide onto the lipid carrier undecaprenyl phosphate, yielding undecaprenyl-pyrophosphoryl-MurNAc-pentapeptide, known as lipid I. The polypeptide is Phospho-N-acetylmuramoyl-pentapeptide-transferase (Bacillus pumilus (strain SAFR-032)).